Reading from the N-terminus, the 432-residue chain is Trigger factor (432 aa).

In terms of domain architecture, PPIase FKBP-type spans 161–246; sequence EDRVTIDFTG…LKKVEERELP (86 aa).

It belongs to the FKBP-type PPIase family. Tig subfamily. As to quaternary structure, homodimer and monomer. In vivo most of the ribosomes are in complex with monomeric TF. Uncomplexed TF, however, is in a monomer-dimer equilibrium with approximately two thirds of TF existing in a dimeric state.

It is found in the cytoplasm. The enzyme catalyses [protein]-peptidylproline (omega=180) = [protein]-peptidylproline (omega=0). Functionally, involved in protein export. Acts as a chaperone by maintaining the newly synthesized protein in an open conformation. Functions as a peptidyl-prolyl cis-trans isomerase. This Escherichia coli O127:H6 (strain E2348/69 / EPEC) protein is Trigger factor.